The following is a 273-amino-acid chain: Zinc finger protein AZF2 (273 aa).

Residues leucine 33–aspartate 64 are disordered. A compositionally biased stretch (basic residues) spans lysine 34–serine 43. Over residues histidine 44–proline 54 the composition is skewed to low complexity. 2 consecutive C2H2-type zinc fingers follow at residues tyrosine 106–histidine 128 and histidine 165–histidine 187. A disordered region spans residues glycine 195–glutamate 215. Residues lysine 201–valine 213 show a composition bias toward low complexity.

As to expression, expressed in roots, radicles, cotyledons, hypocotyls, leaf veins, stems, sepals, petals, stamens, placenta, funiculi and maturated seeds.

It localises to the nucleus. Functionally, transcriptional repressor involved in the inhibition of plant growth under abiotic stress conditions. Can repress the expression of various genes, including osmotic stress and abscisic acid-repressive genes and auxin-inducible genes, by binding to their promoter regions in a DNA sequence-specific manner. Acts as a negative regulator of abscisic acid (ABA) signaling during seed germination. Probably involved in jasmonate (JA) early signaling response. May regulate the expression of the JA biosynthesis gene LOX3 and control the expression of TIFY10A/JAZ1, a key repressor in the JA signaling cascade. May act as a positive regulator of leaf senescence. Has been identified as a suppressor of the deficiency of yeast snf4 mutant to grow on non-fermentable carbon source. This Arabidopsis thaliana (Mouse-ear cress) protein is Zinc finger protein AZF2 (AZF2).